The sequence spans 545 residues: Carboxypeptidase N subunit 2 (545 aa).

Positions 1 to 21 are cleaved as a signal peptide; sequence MLPGAWLLWTSLLLLARPAQP. Residues 22-49 enclose the LRRNT domain; sequence CPMGCDCFVQEVFCSDEELATVPLDIPP. Residues asparagine 74, asparagine 111, and asparagine 119 are each glycosylated (N-linked (GlcNAc...) asparagine). LRR repeat units lie at residues 98–119, 122–143, 146–167, 170–191, 194–215, 218–239, 242–263, 266–287, 290–311, 314–335, 338–359, and 362–383; these read RLED…IFSN, SLGK…LFQH, ALES…LFQP, HLKT…LFHP, SLQT…VFGK, SLQE…VFSQ, CLER…IFAS, NLTF…LFAH, CLVG…TFAH, NLRS…IFRD, ELVK…LFQN, and KLEL…IFDT. Asparagine 228 carries N-linked (GlcNAc...) asparagine glycosylation. Residue asparagine 266 is glycosylated (N-linked (GlcNAc...) asparagine). Residues asparagine 348 and asparagine 359 are each glycosylated (N-linked (GlcNAc...) asparagine). An LRRCT domain is found at 395-447; sequence NPWQCDCHLAYLFNWLQQYTDRLLNIQTYCAGPAYLKGQVVPALNEKQLVCPV. Asparagine 518 carries N-linked (GlcNAc...) asparagine glycosylation.

In terms of assembly, tetramer of two catalytic chains and two glycosylated inactive chains. In terms of processing, whether or not any Cys residues participate in intrachain bonds is unknown, but they do not form interchain disulfide bonds with the 50 kDa catalytic subunit.

The protein resides in the secreted. Its function is as follows. The 83 kDa subunit binds and stabilizes the catalytic subunit at 37 degrees Celsius and keeps it in circulation. Under some circumstances it may be an allosteric modifier of the catalytic subunit. This Homo sapiens (Human) protein is Carboxypeptidase N subunit 2 (CPN2).